A 351-amino-acid polypeptide reads, in one-letter code: Phosphoribosylformylglycinamidine cyclo-ligase (351 aa).

The protein belongs to the AIR synthase family.

The protein resides in the cytoplasm. The enzyme catalyses 2-formamido-N(1)-(5-O-phospho-beta-D-ribosyl)acetamidine + ATP = 5-amino-1-(5-phospho-beta-D-ribosyl)imidazole + ADP + phosphate + H(+). The protein operates within purine metabolism; IMP biosynthesis via de novo pathway; 5-amino-1-(5-phospho-D-ribosyl)imidazole from N(2)-formyl-N(1)-(5-phospho-D-ribosyl)glycinamide: step 2/2. The polypeptide is Phosphoribosylformylglycinamidine cyclo-ligase (Lysinibacillus sphaericus (strain C3-41)).